Reading from the N-terminus, the 669-residue chain is Zeaxanthin epoxidase, chloroplastic (669 aa).

The N-terminal 49 residues, 1–49, are a transit peptide targeting the chloroplast; sequence MYSTVFYTSVHPSTSVLSRKQLPLLISKDFSAELYHSLPCRSLENGHIN. Residues 87-115 and 365-378 contribute to the FAD site; these read KVLVAGGGIGGLVFALAAKKRGFDVLVFE and TFSWGRGRVTLLGD. The region spanning 553 to 617 is the FHA domain; that stretch reads IVLSRDEDVP…HGTWVTDNEG (65 aa).

FAD is required as a cofactor.

Its subcellular location is the plastid. The protein resides in the chloroplast. It carries out the reaction all-trans-zeaxanthin + 4 reduced [2Fe-2S]-[ferredoxin] + 2 O2 + 4 H(+) = all-trans-violaxanthin + 4 oxidized [2Fe-2S]-[ferredoxin] + 2 H2O. It participates in plant hormone biosynthesis; abscisate biosynthesis. Functionally, converts zeaxanthin into antheraxanthin and subsequently violaxanthin. Involved in the epoxidation of zeaxanthin. Plays an important role in resistance to stresses, seed development and dormancy. The sequence is that of Zeaxanthin epoxidase, chloroplastic from Solanum lycopersicum (Tomato).